We begin with the raw amino-acid sequence, 748 residues long: Chondroadherin-like protein (748 aa).

An N-terminal signal peptide occupies residues 1-29 (MERPQSSIWVFMLLLFMVLLQSPAWHVAA). Positions 30–61 (QRCPQTCVCDNSRRHVTCRHQNLTEVPNTIPE) constitute an LRRNT 1 domain. A glycan (N-linked (GlcNAc...) asparagine) is linked at Asn51. LRR repeat units lie at residues 85–107 (PHLT…AFRG), 108–131 (LGRL…ALDG), 132–155 (LGSL…TFGA), 156–179 (LGSL…AFQG), 181–203 (LRTR…ALAG), 204–227 (LPAL…ALSQ), 229–252 (RSLA…GLAL), 253–275 (PGLR…AFAH), and 276–299 (CPRL…QVPG). The region spanning 309–357 (NPLWCACHARPLLEWLVRARVRSDGACRGPRRLRGEALDTLRPSDLRCP) is the LRRCT 1 domain. The tract at residues 352–389 (SDLRCPGDAAAGDGDGDEDEDRPAGPRAPPLRSPHGEA) is disordered. The region spanning 394–428 (PCPPACACVAETRHSTCDGRGLQAVPRGFPNDTQL) is the LRRNT 2 domain. A disulfide bridge links Cys395 with Cys410. 10 LRR repeats span residues 423–446 (PNDT…AFPG), 448–470 (RHLV…ALAG), 471–494 (LDRL…ALEG), 496–518 (PNLG…ALRA), 519–542 (LPTL…DLAG), 544–566 (RALR…ALGP), 567–590 (AREL…ALEG), 591–614 (LPAL…AFQP), 616–639 (GRSL…AFSG), and 641–665 (GKGL…GLSG). Asn625 is a glycosylation site (N-linked (GlcNAc...) asparagine). The region spanning 674 to 722 (NPFHCDCQLLPLHRWLTGLNLRVGATCATPPSVRGQKVKVAAPVFEACP) is the LRRCT 2 domain. Intrachain disulfides connect Cys678/Cys721 and Cys680/Cys700. The tract at residues 728–748 (KAKRTPTSRGSARRTPSLSRH) is disordered. Polar residues predominate over residues 734–748 (TSRGSARRTPSLSRH).

Belongs to the small leucine-rich proteoglycan (SLRP) family. SLRP class IV subfamily. As to quaternary structure, associates with collagen and binds to collagen fibrils. As to expression, expressed in cartilage, including articular knee cartilage, where it localizes to the extracellular space in the area immediately surrounding the chondrocytes, not detected in any other tissues (at protein level).

The protein resides in the secreted. It localises to the extracellular space. Its subcellular location is the extracellular matrix. Its function is as follows. Potential negative modulator of chondrocyte differentiation. Inhibits collagen fibrillogenesis in vitro. May influence chondrocyte's differentiation by acting on its cellular collagenous microenvironment. In Mus musculus (Mouse), this protein is Chondroadherin-like protein (Chadl).